The following is a 64-amino-acid chain: DNA-directed RNA polymerase subunit Rpo10 (64 aa).

4 residues coordinate Zn(2+): cysteine 7, cysteine 10, cysteine 45, and cysteine 46.

It belongs to the archaeal Rpo10/eukaryotic RPB10 RNA polymerase subunit family. Part of the RNA polymerase complex. Zn(2+) serves as cofactor.

It is found in the cytoplasm. It catalyses the reaction RNA(n) + a ribonucleoside 5'-triphosphate = RNA(n+1) + diphosphate. DNA-dependent RNA polymerase (RNAP) catalyzes the transcription of DNA into RNA using the four ribonucleoside triphosphates as substrates. The sequence is that of DNA-directed RNA polymerase subunit Rpo10 from Haloquadratum walsbyi (strain DSM 16790 / HBSQ001).